Consider the following 456-residue polypeptide: Outer membrane protein assembly factor BamB (456 aa).

A signal peptide spans Met1 to Ser19. Cys20 carries the N-palmitoyl cysteine lipid modification. Cys20 is lipidated: S-diacylglycerol cysteine.

The protein belongs to the BamB family. Part of the Bam complex.

It is found in the cell outer membrane. Part of the outer membrane protein assembly complex, which is involved in assembly and insertion of beta-barrel proteins into the outer membrane. The protein is Outer membrane protein assembly factor BamB of Francisella tularensis subsp. tularensis (strain SCHU S4 / Schu 4).